The following is a 216-amino-acid chain: ATP phosphoribosyltransferase (216 aa).

This sequence belongs to the ATP phosphoribosyltransferase family. Short subfamily. As to quaternary structure, heteromultimer composed of HisG and HisZ subunits.

Its subcellular location is the cytoplasm. The catalysed reaction is 1-(5-phospho-beta-D-ribosyl)-ATP + diphosphate = 5-phospho-alpha-D-ribose 1-diphosphate + ATP. The protein operates within amino-acid biosynthesis; L-histidine biosynthesis; L-histidine from 5-phospho-alpha-D-ribose 1-diphosphate: step 1/9. In terms of biological role, catalyzes the condensation of ATP and 5-phosphoribose 1-diphosphate to form N'-(5'-phosphoribosyl)-ATP (PR-ATP). Has a crucial role in the pathway because the rate of histidine biosynthesis seems to be controlled primarily by regulation of HisG enzymatic activity. This Lachnospira eligens (strain ATCC 27750 / DSM 3376 / VPI C15-48 / C15-B4) (Eubacterium eligens) protein is ATP phosphoribosyltransferase.